The following is a 562-amino-acid chain: Dihydroxy-acid dehydratase (562 aa).

D80 contributes to the Mg(2+) binding site. C121 contacts [2Fe-2S] cluster. Residues D122 and K123 each coordinate Mg(2+). K123 is modified (N6-carboxylysine). C194 is a [2Fe-2S] cluster binding site. Position 446 (E446) interacts with Mg(2+). The active-site Proton acceptor is the S472.

This sequence belongs to the IlvD/Edd family. In terms of assembly, homodimer. It depends on [2Fe-2S] cluster as a cofactor. The cofactor is Mg(2+).

The catalysed reaction is (2R)-2,3-dihydroxy-3-methylbutanoate = 3-methyl-2-oxobutanoate + H2O. It catalyses the reaction (2R,3R)-2,3-dihydroxy-3-methylpentanoate = (S)-3-methyl-2-oxopentanoate + H2O. The protein operates within amino-acid biosynthesis; L-isoleucine biosynthesis; L-isoleucine from 2-oxobutanoate: step 3/4. It functions in the pathway amino-acid biosynthesis; L-valine biosynthesis; L-valine from pyruvate: step 3/4. Its function is as follows. Functions in the biosynthesis of branched-chain amino acids. Catalyzes the dehydration of (2R,3R)-2,3-dihydroxy-3-methylpentanoate (2,3-dihydroxy-3-methylvalerate) into 2-oxo-3-methylpentanoate (2-oxo-3-methylvalerate) and of (2R)-2,3-dihydroxy-3-methylbutanoate (2,3-dihydroxyisovalerate) into 2-oxo-3-methylbutanoate (2-oxoisovalerate), the penultimate precursor to L-isoleucine and L-valine, respectively. This Staphylococcus aureus (strain MRSA252) protein is Dihydroxy-acid dehydratase.